We begin with the raw amino-acid sequence, 126 residues long: Large ribosomal subunit protein bL19 (126 aa).

Belongs to the bacterial ribosomal protein bL19 family.

Functionally, this protein is located at the 30S-50S ribosomal subunit interface and may play a role in the structure and function of the aminoacyl-tRNA binding site. The chain is Large ribosomal subunit protein bL19 from Bordetella petrii (strain ATCC BAA-461 / DSM 12804 / CCUG 43448).